The sequence spans 724 residues: MSPLSSLPPKTFISSFHCHSVTRLRRSVTARTMSSQSSQRVFQLRQDPLTGNSEWIVIEDNDQPGTSTDGLLATTSYLDMLNDSRRNIAYRLAIEKTITEPCHVLDIGAGTGLLSMMAVRAMRGDSKGMVTACESYLPMVKLMRKVMHKNGMTKNINLINKRSDELKVGSEDIASRADVLVSEILDSELLGEGLIPSLQHAHDMLLVDNPKTVPYRATTYCQLVESTFLCNLQDLRNNEAKTSDGVRLVPPGLESLFGIKSQQYSMHVDAIEKEIKLLSEPVKIFEFDFWKRPESNGELDVHIEAKTTGSVHAIISWWVLQLDSEGTIFYSTAPRWIDSNSEIGVRDWCDHWKQCVWFTPGTGVSISKGEKVHLHASHTCTNILYNLKKTQSLTHERTHFPLSTGDLHLTLPPERVAIYGDSIYRQSLFEATRKALQGKSYPQCLVIDDSLLLPLMALHISNRSRVLSLSPGLQENAARYFEAIADSNGFSKDRFEYFRDGKTNLAKAYPGKIDLLIGEPYYSGLENGLPWQNLRFWKDRTLLDSVLSEDAVVMPYKGVLRGCAMYLPDLWKSRCCLGSVEGFDHTLVNTTLGGCGDLPSGKDSPCLPFFIWQCGETKILSKEFTVMEFDFSKPITGPCSGEVQIEFIKPGVCHGIALWMDWVMDEENSTVISTGPDDKYWKQGVKLLGKPVTVRMEGPSSSIGIQASLDLSSNSELIVTHTIS.

SAM-dependent MTase PRMT-type domains are found at residues 61–388 (NDQP…YNLK) and 395–721 (HERT…IVTH). Residues Glu183 and Glu192 contribute to the active site.

This sequence belongs to the class I-like SAM-binding methyltransferase superfamily. Protein arginine N-methyltransferase family. PRMT7 subfamily.

Functionally, arginine methyltransferase that can both catalyze the formation of omega-N monomethylarginine (MMA) and symmetrical dimethylarginine (sDMA). In Arabidopsis thaliana (Mouse-ear cress), this protein is Protein arginine N-methyltransferase 1.6 (PRMT16).